We begin with the raw amino-acid sequence, 421 residues long: UDP-N-acetylglucosamine 1-carboxyvinyltransferase 1 (421 aa).

Residue 22 to 23 participates in phosphoenolpyruvate binding; sequence KN. Arg-95 provides a ligand contact to UDP-N-acetyl-alpha-D-glucosamine. Cys-119 acts as the Proton donor in catalysis. Cys-119 is modified (2-(S-cysteinyl)pyruvic acid O-phosphothioketal). Residues 124 to 128, Asp-308, and Val-330 contribute to the UDP-N-acetyl-alpha-D-glucosamine site; that span reads RPIEQ.

The protein belongs to the EPSP synthase family. MurA subfamily.

Its subcellular location is the cytoplasm. The enzyme catalyses phosphoenolpyruvate + UDP-N-acetyl-alpha-D-glucosamine = UDP-N-acetyl-3-O-(1-carboxyvinyl)-alpha-D-glucosamine + phosphate. The protein operates within cell wall biogenesis; peptidoglycan biosynthesis. Its function is as follows. Cell wall formation. Adds enolpyruvyl to UDP-N-acetylglucosamine. The sequence is that of UDP-N-acetylglucosamine 1-carboxyvinyltransferase 1 from Staphylococcus aureus (strain MRSA252).